Reading from the N-terminus, the 426-residue chain is Potassium channel subfamily K member 2 (426 aa).

Topologically, residues M1 to T61 are cytoplasmic. Important for GNG4 binding and L-glutamate release in astrocytes regions lie at residues A17–S38 and D51–T61. Residues V62 to A82 form a helical membrane-spanning segment. 2 N-linked (GlcNAc...) asparagine glycosylation sites follow: N110 and N134. Residues L144–G170 constitute an intramembrane region (pore-forming). K(+)-binding residues include T157, I158, G159, and F160. A selectivity filter 1 region spans residues T157–N162. Residues I172–V192 form a helical membrane-spanning segment. Topologically, residues G193–R222 are cytoplasmic. A helical transmembrane segment spans residues I223–V243. Positions A253–D283 form an intramembrane region, pore-forming. K(+) contacts are provided by T266, I267, G268, and F269. Residues T266 to D271 form a selectivity filter 2 region. The helical transmembrane segment at V288–G308 threads the bilayer. The Cytoplasmic portion of the chain corresponds to D309 to K426. The segment at V313–R326 is interaction with AKAP5. The interval T337–S385 is essential for chloroform and halothane sensitivity. Residue S348 is modified to Phosphoserine; by PKA.

The protein belongs to the two pore domain potassium channel (TC 1.A.1.8) family. As to quaternary structure, homodimer; disulfide-linked. Forms heterodimers with other 2-pore domain K(+) channel subunits, such as KCNK1, KCNK4, KCNK10 and KCNK18. Interacts with AKAP5; the channel is recruited to postsynaptic microdomains by AKAP5 where it can integrate neurotransmitter receptor signals. Part of a complex composed of AKAP5 and ADRB2. Upon AKAP5 binding, the channel is no longer sensitive to intracellular acidification, membrane stretch or arachidonic acid stimuli. Interacts with POPDC1; the interaction enhances KCNK2 surface expression and is inhibited by cAMP. Interacts (via N-terminus) with G-protein subunit GNG4 (via C-terminus); this interaction confers ion selectivity to L-glutamate and Cl(-) anions. Post-translationally, phosphorylation at Ser-348 controls the reversible conversion from a leak channel to a voltage-dependent channel. As to expression, expressed in cardiomyocytes (at protein level). Expressed in various brain regions including the lateral olfactory tract, piriform cortex of the forebrain, paraventricular and anteromedial thalamic nuclei, brainstem, caudate putamen, nucleus accumbens, neocortex and interpeduncular nucleus. Detected in astrocytes in hippocampus stratum radiatum. Expressed in brain and kidney.

Its subcellular location is the cell membrane. The protein resides in the endoplasmic reticulum membrane. The protein localises to the cell projection. It is found in the axon. It localises to the dendrite. Its subcellular location is the postsynaptic density membrane. The protein resides in the sarcolemma. The catalysed reaction is K(+)(in) = K(+)(out). It catalyses the reaction L-glutamate(out) = L-glutamate(in). The enzyme catalyses chloride(in) = chloride(out). It carries out the reaction Rb(+)(in) = Rb(+)(out). The catalysed reaction is Cs(+)(in) = Cs(+)(out). Activated by various stimuli including intracellular acidic pH, mechanical stretch and polyunsaturated fatty acids such as arachidonic acid. Functionally, k(+) channel that conducts voltage-dependent outward rectifying currents upon membrane depolarization. Voltage sensing is coupled to K(+) electrochemical gradient in an 'ion flux gating' mode where outward but not inward ion flow opens the gate. Converts to voltage-independent 'leak' conductance mode upon stimulation by various stimuli including mechanical membrane stretch, acidic pH, heat and lipids. Reversibly converts between a voltage-insensitive K(+) 'leak' channel and a voltage-dependent outward rectifying K(+) channel in a phosphorylation-dependent manner. Homo- and heterodimerizes to form functional channels with distinct regulatory and gating properties. In trigeminal ganglia sensory neurons, the heterodimer of KCNK2/TREK-1 and KCNK18/TRESK inhibits neuronal firing and neurogenic inflammation by stabilizing the resting membrane potential at K(+) equilibrium potential as well as by regulating the threshold of action potentials and the spike frequency. At trigeminal A-beta afferent nerves, the heterodimer of KCNK2/TREK-1 and KCNK4/TRAAK is mostly coexpressed at nodes of Ranvier where it conducts voltage-independent mechanosensitive and thermosensitive currents, allowing rapid action potential repolarization, high speed and high frequence saltatory conduction on myelinated nerves to ensure prompt sensory responses. In hippocampal astrocytes, the heterodimer of KCNK2/TREK-1 and KCNK1/TWIK-1 allows passive K(+) conductance under basal conditions, but changes ion selectivity and becomes permeable to L-glutamate and Cl(-) ions upon binding to G-protein subunit GNG4 in stimulated astrocytes. Mediates rapid L-glutamate release in response to activation of G-protein-coupled receptors such as F2R and CNR1. In hippocampal pyramidal neurons, the homodimer of KCNK2/TREK-1 contributes to gamma-aminobutyric acid (GABA) B-induced slow inhibitory postsynaptic potential. Associates with AKAP5 and Gs-protein-coupled receptor B2AR at postsynaptic dense bodies and converts to a leak channel no longer sensitive to stimulation by arachidonic acid, acidic pH or mechanical stress, nor inhibited by Gq-coupled receptors but still under the negative control of Gs-coupled receptors. Permeable to other monovalent cations such as Rb(+) and Cs(+). In terms of biological role, does not display channel activity but reduces the channel activity of isoform 1, isoform 2 and isoform 4 and reduces cell surface expression of isoform 2. This chain is Potassium channel subfamily K member 2, found in Rattus norvegicus (Rat).